A 504-amino-acid polypeptide reads, in one-letter code: Maturase K (504 aa).

The protein belongs to the intron maturase 2 family. MatK subfamily.

The protein localises to the plastid. It is found in the chloroplast. Usually encoded in the trnK tRNA gene intron. Probably assists in splicing its own and other chloroplast group II introns. This is Maturase K from Hamamelis japonica (Japanese witch hazel).